Reading from the N-terminus, the 206-residue chain is Uridine kinase (206 aa).

11-18 (GGTGSGKS) lines the ATP pocket.

It belongs to the uridine kinase family.

The protein localises to the cytoplasm. It carries out the reaction uridine + ATP = UMP + ADP + H(+). It catalyses the reaction cytidine + ATP = CMP + ADP + H(+). It participates in pyrimidine metabolism; CTP biosynthesis via salvage pathway; CTP from cytidine: step 1/3. Its pathway is pyrimidine metabolism; UMP biosynthesis via salvage pathway; UMP from uridine: step 1/1. In Clostridium botulinum (strain Kyoto / Type A2), this protein is Uridine kinase.